Reading from the N-terminus, the 427-residue chain is 3-phosphoshikimate 1-carboxyvinyltransferase (427 aa).

The 3-phosphoshikimate site is built by Lys-22, Ser-23, and Arg-27. Lys-22 contacts phosphoenolpyruvate. Phosphoenolpyruvate contacts are provided by Gly-96 and Arg-124. 3-phosphoshikimate contacts are provided by Ser-169, Ser-170, Gln-171, Ser-197, Asp-313, Asn-336, and Lys-340. Position 171 (Gln-171) interacts with phosphoenolpyruvate. Catalysis depends on Asp-313, which acts as the Proton acceptor. Arg-344, Arg-386, and Lys-411 together coordinate phosphoenolpyruvate.

Belongs to the EPSP synthase family. In terms of assembly, monomer.

Its subcellular location is the cytoplasm. The catalysed reaction is 3-phosphoshikimate + phosphoenolpyruvate = 5-O-(1-carboxyvinyl)-3-phosphoshikimate + phosphate. It participates in metabolic intermediate biosynthesis; chorismate biosynthesis; chorismate from D-erythrose 4-phosphate and phosphoenolpyruvate: step 6/7. Its function is as follows. Catalyzes the transfer of the enolpyruvyl moiety of phosphoenolpyruvate (PEP) to the 5-hydroxyl of shikimate-3-phosphate (S3P) to produce enolpyruvyl shikimate-3-phosphate and inorganic phosphate. This chain is 3-phosphoshikimate 1-carboxyvinyltransferase, found in Salmonella typhimurium (strain LT2 / SGSC1412 / ATCC 700720).